Here is a 379-residue protein sequence, read N- to C-terminus: Tryptophan 2,3-dioxygenase (379 aa).

Residues 57-61 and Arg128 each bind substrate; that span reads FIITH. His312 serves as a coordination point for heme. Thr327 is a binding site for substrate.

Belongs to the tryptophan 2,3-dioxygenase family. As to quaternary structure, homotetramer. Dimer of dimers. The cofactor is heme.

It catalyses the reaction L-tryptophan + O2 = N-formyl-L-kynurenine. It functions in the pathway amino-acid degradation; L-tryptophan degradation via kynurenine pathway; L-kynurenine from L-tryptophan: step 1/2. Its pathway is pigment biosynthesis; ommochrome biosynthesis. In terms of biological role, heme-dependent dioxygenase that catalyzes the oxidative cleavage of the L-tryptophan (L-Trp) pyrrole ring and converts L-tryptophan to N-formyl-L-kynurenine. Catalyzes the oxidative cleavage of the indole moiety. Required during larval growth to control the level of potentially harmful free tryptophan in the hemolymph. In the adult the same reaction is the first step in the ommochrome biosynthetic pathway. The chain is Tryptophan 2,3-dioxygenase from Drosophila melanogaster (Fruit fly).